The sequence spans 369 residues: tRNA-specific 2-thiouridylase MnmA (369 aa).

Residues 16 to 23 (AMSGGVDS) and M42 contribute to the ATP site. The Nucleophile role is filled by C110. A disulfide bridge connects residues C110 and C206. G134 is a binding site for ATP. The interval 156–158 (KDQ) is interaction with tRNA. C206 (cysteine persulfide intermediate) is an active-site residue.

It belongs to the MnmA/TRMU family.

It localises to the cytoplasm. The catalysed reaction is S-sulfanyl-L-cysteinyl-[protein] + uridine(34) in tRNA + AH2 + ATP = 2-thiouridine(34) in tRNA + L-cysteinyl-[protein] + A + AMP + diphosphate + H(+). Functionally, catalyzes the 2-thiolation of uridine at the wobble position (U34) of tRNA, leading to the formation of s(2)U34. The chain is tRNA-specific 2-thiouridylase MnmA from Orientia tsutsugamushi (strain Boryong) (Rickettsia tsutsugamushi).